The following is a 258-amino-acid chain: Imidazole glycerol phosphate synthase subunit HisF (258 aa).

Catalysis depends on residues D11 and D130.

Belongs to the HisA/HisF family. Heterodimer of HisH and HisF.

Its subcellular location is the cytoplasm. The enzyme catalyses 5-[(5-phospho-1-deoxy-D-ribulos-1-ylimino)methylamino]-1-(5-phospho-beta-D-ribosyl)imidazole-4-carboxamide + L-glutamine = D-erythro-1-(imidazol-4-yl)glycerol 3-phosphate + 5-amino-1-(5-phospho-beta-D-ribosyl)imidazole-4-carboxamide + L-glutamate + H(+). The protein operates within amino-acid biosynthesis; L-histidine biosynthesis; L-histidine from 5-phospho-alpha-D-ribose 1-diphosphate: step 5/9. In terms of biological role, IGPS catalyzes the conversion of PRFAR and glutamine to IGP, AICAR and glutamate. The HisF subunit catalyzes the cyclization activity that produces IGP and AICAR from PRFAR using the ammonia provided by the HisH subunit. The sequence is that of Imidazole glycerol phosphate synthase subunit HisF from Azorhizobium caulinodans (strain ATCC 43989 / DSM 5975 / JCM 20966 / LMG 6465 / NBRC 14845 / NCIMB 13405 / ORS 571).